Reading from the N-terminus, the 207-residue chain is GTP cyclohydrolase-2 (207 aa).

49-53 (RTHSE) is a GTP binding site. Residues C54, C65, and C67 each coordinate Zn(2+). GTP is bound by residues Q70, 92–94 (EGR), and T114. The Proton acceptor role is filled by D126. The active-site Nucleophile is the R128. GTP is bound by residues T149 and K154.

This sequence belongs to the GTP cyclohydrolase II family. Zn(2+) serves as cofactor.

It catalyses the reaction GTP + 4 H2O = 2,5-diamino-6-hydroxy-4-(5-phosphoribosylamino)-pyrimidine + formate + 2 phosphate + 3 H(+). It participates in cofactor biosynthesis; riboflavin biosynthesis; 5-amino-6-(D-ribitylamino)uracil from GTP: step 1/4. In terms of biological role, catalyzes the conversion of GTP to 2,5-diamino-6-ribosylamino-4(3H)-pyrimidinone 5'-phosphate (DARP), formate and pyrophosphate. The polypeptide is GTP cyclohydrolase-2 (Hahella chejuensis (strain KCTC 2396)).